The following is a 423-amino-acid chain: Protein CLP1 homolog (423 aa).

ATP-binding positions include E16, K57, and D119 to T124.

This sequence belongs to the Clp1 family. Clp1 subfamily.

The protein localises to the nucleus. Required for endonucleolytic cleavage during polyadenylation-dependent pre-mRNA 3'-end formation. The sequence is that of Protein CLP1 homolog (cbc) from Drosophila sechellia (Fruit fly).